A 136-amino-acid polypeptide reads, in one-letter code: Large ribosomal subunit protein uL16 (136 aa).

This sequence belongs to the universal ribosomal protein uL16 family. Part of the 50S ribosomal subunit.

Functionally, binds 23S rRNA and is also seen to make contacts with the A and possibly P site tRNAs. The polypeptide is Large ribosomal subunit protein uL16 (Ehrlichia ruminantium (strain Gardel)).